The sequence spans 872 residues: MTDSDEDALKVDQGPSQDIPKPWVIPAPKGFLQHIFGTSQVFQSICDVKPKVTGLTVPLKVREYYSRGQQCLEQADWETAVLFFSRALHLDPQLVDFYALRAEAYLQLCDFSSAAQNLRRAYSLQQDNCKHLERLTFVLYLQGQCLFEQCAFLDALNVFSHAAELQPEKACFRYRCMACLLALEQHPACLSLITEELKQDTTNADVYILRARLYNFLQKPHLCYRDLHGALLLNPKHPQARMLLQKMVAQAQQARQDAGILAVQGRLQHALQRINCAIENNPLDPSFFLFRGTMYRRLQEFDGAVEDFLKVLDMVTEDQEDIMRQAQRQLLLTYNDFAVHCYRQGAYQEGVLLLNKALRDEQQEKGLYINRGDCFFQLGNLAFAEADYQQALALSPQDEGANTRMGLLQEKMGFCEQKHRQFQKAEDHFSTAIRHNPQKAQYYLYRAKSRQLLQNIFGARQDVATVLLLNPKQPKLSLLMTNLFPGMSVEEVLSTQIAHLARLQLERMVEGSLQAGGPQGIVGMLKQWELERQKALALQHSWKQGEPLIETSEKLQATPEIPQVEPGSSEGQAEAPKEEEEKEEEEQKEEEEQKKEEKKEEKKPKLTPSKVASLSESYLDQTSLASSMSFRTTCTSETETSAICQEYRSTSATAMTFSDSSLLKTQSSDSGNNREALSHGPRKIKDIQGQRQSLSKTQATQSQRQNFSKTKAAAHRRNSSKTKATQGQGRRSSKTEATQGQRQSSSEIETSQGPRQEPSKTKTTRSPRQRPRKVKAARGRSWRPSKLDATQGRRRGLLRSSTKTEAFYDSNWSLSKTEDVQGQGQRTSKAEAAQGKSRGMSSTSSKAESTWGPSPSVSKTEVGQDLTYYEVL.

Residues 1–20 (MTDSDEDALKVDQGPSQDIP) are disordered. TPR repeat units follow at residues 61–94 (VREY…DPQL), 96–128 (DFYA…QQDN), 136–169 (TFVL…QPEK), 251–284 (AQQA…NPLD), 285–318 (PSFF…VTED), 331–364 (LLTY…EQQE), 365–398 (KGLY…SPQD), and 406–439 (GLLQ…NPQK). Disordered regions lie at residues 557-640 (ATPE…ETET) and 653-872 (TAMT…YEVL). Acidic residues predominate over residues 577-590 (KEEEEKEEEEQKEE). Residues 591–604 (EEQKKEEKKEEKKP) show a composition bias toward basic and acidic residues. 4 stretches are compositionally biased toward polar residues: residues 610-640 (KVAS…ETET), 653-675 (TAMT…NNRE), 689-709 (GQRQ…NFSK), and 721-754 (KTKA…SQGP). Residues 762-783 (KTTRSPRQRPRKVKAARGRSWR) show a composition bias toward basic residues. Polar residues-rich tracts occupy residues 799-827 (RSST…GQRT) and 839-861 (GMSS…SKTE).

This Macaca fascicularis (Crab-eating macaque) protein is Tetratricopeptide repeat protein 16 (TTC16).